The sequence spans 132 residues: Small ribosomal subunit protein uS8 (132 aa).

It belongs to the universal ribosomal protein uS8 family. As to quaternary structure, part of the 30S ribosomal subunit. Contacts proteins S5 and S12.

In terms of biological role, one of the primary rRNA binding proteins, it binds directly to 16S rRNA central domain where it helps coordinate assembly of the platform of the 30S subunit. The protein is Small ribosomal subunit protein uS8 of Methylocella silvestris (strain DSM 15510 / CIP 108128 / LMG 27833 / NCIMB 13906 / BL2).